Reading from the N-terminus, the 303-residue chain is MSQIDKMAKIKKLREISDAPFVDCKKALENSDYDIDLAINWLNKNGKSKALKKSDRIAAEGLVLAKKDANSVLVFELNSETDFVAKNQNFINLQQKIGELLLANDFVNLEDALLIQDEAGRSISELMILATATIGEKITLRRVFKTKYSLEQSVEVYTHSNGQIAVITILKGGNLEIAKNISMHVAALNPQYILKVEVPNEKLQEIQLEVEKKAFAEVKNFEKKPENVRVGILKGMIDKQLSEFVLELQPLATDSAVTVEKYLAQNSATLEKVVRFEVGEGIQKQNVDFSAEVNQQIQEFQKK.

The interval Thr-81–Val-84 is involved in Mg(2+) ion dislocation from EF-Tu.

It belongs to the EF-Ts family.

The protein localises to the cytoplasm. In terms of biological role, associates with the EF-Tu.GDP complex and induces the exchange of GDP to GTP. It remains bound to the aminoacyl-tRNA.EF-Tu.GTP complex up to the GTP hydrolysis stage on the ribosome. This is Elongation factor Ts from Mesomycoplasma hyopneumoniae (strain 232) (Mycoplasma hyopneumoniae).